Reading from the N-terminus, the 603-residue chain is Insulin-like growth factor-binding protein complex acid labile subunit (603 aa).

Positions 1 to 23 are cleaved as a signal peptide; that stretch reads MALRTGSPALVVLLAFWVALGPC. Residues 32–74 enclose the LRRNT domain; the sequence is ASADAEGPQCPVTCTCSYDDYTDELSVFCSSRNLTQLPDGIPV. Intrachain disulfides connect Cys-41–Cys-47 and Cys-45–Cys-60. N-linked (GlcNAc...) asparagine glycans are attached at residues Asn-64, Asn-85, and Asn-96. LRR repeat units follow at residues 75–96, 99–120, 123–144, 147–168, 171–192, 195–216, 219–240, 243–264, 267–288, 291–312, 315–336, 339–360, 363–384, 387–408, 411–432, 435–456, 459–480, 483–504, and 507–528; these read STRA…AFQN, SLDF…ALLG, NLYH…LFRH, SLAS…LFRG, HLWD…VFQG, NLHE…LLCG, ELRE…VFIH, RLQK…AFLG, ALRW…TFPG, GLHV…TFKD, FLEE…TFEG, QLEV…AFFG, NVAV…VFQG, RLHS…TFAG, GLRR…SLAG, ELLE…LFQG, QLEY…VLGP, RAFW…LFSS, and RLRY…PGLE. Residue Asn-368 is glycosylated (N-linked (GlcNAc...) asparagine). A glycan (N-linked (GlcNAc...) asparagine) is linked at Asn-515. Residues 535 to 603 enclose the LRRCT domain; the sequence is NPWDCSCPLK…DISETLFVHC (69 aa). Intrachain disulfides connect Cys-539–Cys-581, Cys-541–Cys-603, and Cys-565–Cys-570. N-linked (GlcNAc...) asparagine glycans are attached at residues Asn-578 and Asn-586.

Forms a ternary complex with IGF1 and IGFBP3.

It localises to the secreted. Its subcellular location is the extracellular space. Functionally, may have an important role in regulating the access of circulating IGFs to the tissues. The sequence is that of Insulin-like growth factor-binding protein complex acid labile subunit (Igfals) from Mus musculus (Mouse).